The sequence spans 533 residues: Calcium-dependent protein kinase 19 (533 aa).

2 stretches are compositionally biased toward polar residues: residues 1–12 (MGSCCSRATSPD) and 24–38 (SHQT…SYNH). Positions 1–53 (MGSCCSRATSPDSGRGGANGYGYSHQTKPAQTTPSYNHPQPPPPAEVRYTPSA) are disordered. Residue glycine 2 is the site of N-myristoyl glycine attachment. Positions 85 to 343 (YSLGKELGRG…SAQVLQHPWL (259 aa)) constitute a Protein kinase domain. Residues 91 to 99 (LGRGQFGVT) and lysine 114 each bind ATP. Catalysis depends on aspartate 209, which acts as the Proton acceptor. The tract at residues 348 to 378 (ASDKPIDSAVLSRMKQFRAMNKLKKMALKVI) is autoinhibitory domain. 4 EF-hand domains span residues 385–420 (EEIK…LGSK), 421–456 (LSEA…RHKL), 457–492 (ERDE…HEMG), and 497–527 (IKDI…GGMQ). 19 residues coordinate Ca(2+): aspartate 398, aspartate 400, serine 402, threonine 404, glutamate 409, aspartate 434, aspartate 436, asparagine 438, serine 440, glutamate 445, aspartate 470, aspartate 472, serine 474, glutamate 481, aspartate 505, aspartate 507, aspartate 509, arginine 511, and glutamate 516.

The protein belongs to the protein kinase superfamily. Ser/Thr protein kinase family. CDPK subfamily. As to expression, expressed in root tips, leaf veins, mesophyll cells, flower reproductive organs and mature pollen grains.

Its subcellular location is the membrane. The catalysed reaction is L-seryl-[protein] + ATP = O-phospho-L-seryl-[protein] + ADP + H(+). The enzyme catalyses L-threonyl-[protein] + ATP = O-phospho-L-threonyl-[protein] + ADP + H(+). Activated by calcium. Autophosphorylation may play an important role in the regulation of the kinase activity. In terms of biological role, may play a role in signal transduction pathways that involve calcium as a second messenger. This is Calcium-dependent protein kinase 19 from Oryza sativa subsp. japonica (Rice).